The following is an 840-amino-acid chain: Protein translocase subunit SecA (840 aa).

ATP-binding positions include Q89, 107–111 (GEGKT), and D514.

Belongs to the SecA family. In terms of assembly, monomer and homodimer. Part of the essential Sec protein translocation apparatus which comprises SecA, SecYEG and auxiliary proteins SecDF-YajC and YidC.

It is found in the cell inner membrane. It localises to the cytoplasm. The catalysed reaction is ATP + H2O + cellular proteinSide 1 = ADP + phosphate + cellular proteinSide 2.. Functionally, part of the Sec protein translocase complex. Interacts with the SecYEG preprotein conducting channel. Has a central role in coupling the hydrolysis of ATP to the transfer of proteins into and across the cell membrane, serving as an ATP-driven molecular motor driving the stepwise translocation of polypeptide chains across the membrane. The polypeptide is Protein translocase subunit SecA (Blochmanniella floridana).